Here is a 457-residue protein sequence, read N- to C-terminus: UDP-N-acetyl-alpha-D-muramoyl-L-alanyl-L-glutamate epimerase (457 aa).

It belongs to the MurL family.

It catalyses the reaction UDP-N-acetyl-alpha-D-muramoyl-L-alanyl-L-glutamate + ATP + H2O = UDP-N-acetyl-alpha-D-muramoyl-L-alanyl-D-glutamate + AMP + diphosphate + H(+). It functions in the pathway cell wall biogenesis; peptidoglycan biosynthesis. Its function is as follows. Cell wall formation. Catalyzes epimerization of the terminal L-glutamate in UDP-N-acetyl-alpha-D-muramoyl-L-alanyl-L-glutamate. This Salinispora tropica (strain ATCC BAA-916 / DSM 44818 / JCM 13857 / NBRC 105044 / CNB-440) protein is UDP-N-acetyl-alpha-D-muramoyl-L-alanyl-L-glutamate epimerase.